The primary structure comprises 392 residues: GTPase Obg (392 aa).

The region spanning 1 to 159 (MKFVDEATIL…RDLQLELMLL (159 aa)) is the Obg domain. The tract at residues 127–148 (NSRFKSSVNRSPRQKTMGTPGD) is disordered. The span at 129 to 143 (RFKSSVNRSPRQKTM) shows a compositional bias: polar residues. The 174-residue stretch at 160–333 (ADVGMLGMPN…LCWDVMAFII (174 aa)) folds into the OBG-type G domain. GTP is bound by residues 166–173 (GMPNAGKS), 191–195 (FTTLV), 213–216 (DIPG), 283–286 (NKID), and 314–316 (SAA). Mg(2+) contacts are provided by S173 and T193. Positions 363-386 (EQEVEVEDDEEWDEDWDEDDEEGV) are enriched in acidic residues. The disordered stretch occupies residues 363–392 (EQEVEVEDDEEWDEDWDEDDEEGVEFIYKR).

It belongs to the TRAFAC class OBG-HflX-like GTPase superfamily. OBG GTPase family. In terms of assembly, monomer. Mg(2+) is required as a cofactor.

It is found in the cytoplasm. In terms of biological role, an essential GTPase which binds GTP, GDP and possibly (p)ppGpp with moderate affinity, with high nucleotide exchange rates and a fairly low GTP hydrolysis rate. Plays a role in control of the cell cycle, stress response, ribosome biogenesis and in those bacteria that undergo differentiation, in morphogenesis control. This chain is GTPase Obg, found in Enterobacter sp. (strain 638).